A 181-amino-acid polypeptide reads, in one-letter code: Small ribosomal subunit protein uS4 (181 aa).

An S4 RNA-binding domain is found at 108–180; the sequence is RRLQTIVYRK…GERQRIMNQR (73 aa).

This sequence belongs to the universal ribosomal protein uS4 family. As to quaternary structure, part of the 30S ribosomal subunit. Contacts protein S5. The interaction surface between S4 and S5 is involved in control of translational fidelity.

Its function is as follows. One of the primary rRNA binding proteins, it binds directly to 16S rRNA where it nucleates assembly of the body of the 30S subunit. Functionally, with S5 and S12 plays an important role in translational accuracy. The protein is Small ribosomal subunit protein uS4 of Methanocorpusculum labreanum (strain ATCC 43576 / DSM 4855 / Z).